The following is a 67-amino-acid chain: Large ribosomal subunit protein uL29 (67 aa).

It belongs to the universal ribosomal protein uL29 family.

This chain is Large ribosomal subunit protein uL29, found in Wolbachia sp. subsp. Drosophila simulans (strain wRi).